A 231-amino-acid polypeptide reads, in one-letter code: Claudin-10 (231 aa).

The helical transmembrane segment at 1–21 threads the bilayer; that stretch reads MASTASEIIAFMVSISGWVLV. Residues 22–80 lie on the Extracellular side of the membrane; the sequence is SSTLPTDYWKVSTIDGTVITTATYWANLWKTCVTDSTGVSNCKDFPSMLALDGYIQACR. A helical membrane pass occupies residues 81–101; the sequence is GLMIAAVSLGFFGSIFALIGM. Topologically, residues 102–115 are cytoplasmic; it reads KCTKVGGSDKAKAK. A helical membrane pass occupies residues 116-136; that stretch reads IACLAGIVFILSGLCSMTGCS. The Extracellular portion of the chain corresponds to 137–160; that stretch reads LYANKITTEFFDPLFVEQKYELGA. A helical membrane pass occupies residues 161-181; sequence ALFIGWAGASLCLIGGVIFCF. Residues 182–231 lie on the Cytoplasmic side of the membrane; that stretch reads SISDNNKAPRMGYTYNGATSVMSSRTKYHGREGDLKTPNPSKQFDKNAYV.

This sequence belongs to the claudin family. As to quaternary structure, can form homodimers both in trans (interaction between CLDN10 molecules in opposing membranes) and in cis (interaction between CLDN10 molecules within one membrane). Interacts with CLDN19.

It is found in the cell junction. The protein localises to the tight junction. The protein resides in the cell membrane. It carries out the reaction Na(+)(in) = Na(+)(out). It catalyses the reaction Li(+)(in) = Li(+)(out). The catalysed reaction is K(+)(in) = K(+)(out). The enzyme catalyses Rb(+)(in) = Rb(+)(out). It carries out the reaction Cs(+)(in) = Cs(+)(out). It catalyses the reaction NH4(+)(in) = NH4(+)(out). The catalysed reaction is methylamine(out) = methylamine(in). The enzyme catalyses Mg(2+)(in) = Mg(2+)(out). It carries out the reaction Ca(2+)(in) = Ca(2+)(out). It catalyses the reaction Sr(2+)(in) = Sr(2+)(out). The catalysed reaction is chloride(in) = chloride(out). The enzyme catalyses nitrate(in) = nitrate(out). Its function is as follows. Forms paracellular channels: polymerizes in tight junction strands with cation- and anion-selective channels through the strands, conveying epithelial permeability in a process known as paracellular tight junction permeability. In sweat glands and in the thick ascending limb (TAL) of Henle's loop in kidney, it controls paracellular sodium permeability which is essential for proper sweat production and renal function. In renal proximal tubules, it conveys selective chloride over hydrogencarbonate anion permeability which is required for renal chloride reabsorption and salt homeostasis. This is Claudin-10 (CLDN10) from Bos taurus (Bovine).